The primary structure comprises 789 residues: Kin of IRRE-like protein 1 (789 aa).

A signal peptide spans 1–47; the sequence is MTLENRSTCLMTCQSSLLPKKPRFLSQKMWAPHLVVAYLIFVTLALA. Residues asparagine 5, asparagine 78, and asparagine 172 are each glycosylated (N-linked (GlcNAc...) asparagine). The Extracellular segment spans residues 48 to 531; sequence LPGTQTRFSQ…REVLPVGIIA (484 aa). 5 Ig-like C2-type domains span residues 49-147, 152-248, 255-335, 340-419, and 424-520; these read PGTQ…AKLT, PEDT…TSIE, PTVT…TLVN, PRIV…EVPL, and PPII…IQLE. A disulfide bond links cysteine 74 and cysteine 132. Cystine bridges form between cysteine 175–cysteine 232 and cysteine 276–cysteine 319. The N-linked (GlcNAc...) asparagine glycan is linked to asparagine 329. Residues cysteine 361 and cysteine 403 are joined by a disulfide bond. The Cell attachment site signature appears at 437–439; the sequence is RGD. A disulfide bond links cysteine 445 and cysteine 504. Residue asparagine 503 is glycosylated (N-linked (GlcNAc...) asparagine). A helical membrane pass occupies residues 532–552; the sequence is GATIGAGILLVFSFAALVFFL. The Cytoplasmic segment spans residues 553 to 789; sequence YRRRKGSRKD…RFQQRMQTHV (237 aa). At serine 606 the chain carries Phosphoserine. Phosphotyrosine; by FYN occurs at positions 637 and 638. Phosphotyrosine occurs at positions 654 and 657. Residues 687 to 713 form a disordered region; that stretch reads RAPASDYGTEPTPSGPSAPGGTDTTSQ. The segment covering 694–712 has biased composition (low complexity); the sequence is GTEPTPSGPSAPGGTDTTS. Tyrosine 756 is modified (phosphotyrosine).

This sequence belongs to the immunoglobulin superfamily. Interacts with TJP1/ZO-1 and with NPHS2/podocin (via the C-terminus). Interacts with NPHS1/nephrin (via the Ig-like domains); this interaction is dependent on KIRREL1 glycosylation. Homodimer (via the Ig-like domains). Interacts when tyrosine-phosphorylated with GRB2. In terms of processing, phosphorylation probably regulates the interaction with NPHS2. Phosphorylated at Tyr-637 and Tyr-638 by FYN, leading to GRB2 binding. N-glycosylated.

It localises to the cell membrane. Its function is as follows. Required for proper function of the glomerular filtration barrier. It is involved in the maintenance of a stable podocyte architecture with interdigitating foot processes connected by specialized cell-cell junctions, known as the slit diaphragm. It is a signaling protein that needs the presence of TEC kinases to fully trans-activate the transcription factor AP-1. The chain is Kin of IRRE-like protein 1 (Kirrel1) from Rattus norvegicus (Rat).